We begin with the raw amino-acid sequence, 259 residues long: MDNNRKVIIVGAGPGDPELITIKGKKAIEEADVIIYAGSLVNEKLLEYNKKNAEIYNSANMNLEEIIDVMVKAVNQGKKVVRLHTGDPSIYGAIKEQIDELSKYGIDVEIIPGVSSLFAATASLKVELTLPEVSQTVIITRPEGRTPMPEKEKLRDLAKHQSTMAIFLGVSMIDKVVKELIEGGYREETPVAVVYHASWDDEKIVRGTLKDIAEKVKKEGIKKTALIIVGEVLNPKYYAYSKLYDKNFEHEYRKSHKKF.

It belongs to the precorrin methyltransferase family.

It carries out the reaction Co-precorrin-4 + S-adenosyl-L-methionine = Co-precorrin-5A + S-adenosyl-L-homocysteine + H(+). The protein operates within cofactor biosynthesis; adenosylcobalamin biosynthesis; cob(II)yrinate a,c-diamide from sirohydrochlorin (anaerobic route): step 4/10. In terms of biological role, catalyzes the methylation of C-11 in cobalt-precorrin-4 to form cobalt-precorrin-5A. The polypeptide is Cobalt-precorrin-4 C(11)-methyltransferase (cbiF) (Methanocaldococcus jannaschii (strain ATCC 43067 / DSM 2661 / JAL-1 / JCM 10045 / NBRC 100440) (Methanococcus jannaschii)).